Reading from the N-terminus, the 167-residue chain is Protein archease (167 aa).

A2 carries the N-acetylalanine modification. The Ca(2+) site is built by D39, D166, and I167.

Belongs to the archease family. Component of the tRNA-splicing ligase complex.

Component of the tRNA-splicing ligase complex required to facilitate the enzymatic turnover of catalytic subunit RTCB. Together with DDX1, acts by facilitating the guanylylation of RTCB, a key intermediate step in tRNA ligation. The chain is Protein archease (ZBTB8OS) from Homo sapiens (Human).